The sequence spans 332 residues: Phosphate acyltransferase (332 aa).

The protein belongs to the PlsX family. In terms of assembly, homodimer. Probably interacts with PlsY.

It localises to the cytoplasm. It catalyses the reaction a fatty acyl-[ACP] + phosphate = an acyl phosphate + holo-[ACP]. The protein operates within lipid metabolism; phospholipid metabolism. In terms of biological role, catalyzes the reversible formation of acyl-phosphate (acyl-PO(4)) from acyl-[acyl-carrier-protein] (acyl-ACP). This enzyme utilizes acyl-ACP as fatty acyl donor, but not acyl-CoA. This is Phosphate acyltransferase from Bacillus pumilus (strain SAFR-032).